The sequence spans 440 residues: D-serine dehydratase (440 aa).

Lys-116 bears the N6-(pyridoxal phosphate)lysine mark.

This sequence belongs to the serine/threonine dehydratase family. DsdA subfamily. Monomer. Pyridoxal 5'-phosphate is required as a cofactor.

It carries out the reaction D-serine = pyruvate + NH4(+). The polypeptide is D-serine dehydratase (Salmonella typhimurium (strain LT2 / SGSC1412 / ATCC 700720)).